A 335-amino-acid chain; its full sequence is DNA-directed RNA polymerase subunit alpha (335 aa).

The alpha N-terminal domain (alpha-NTD) stretch occupies residues 1 to 233; the sequence is MTRTANEFLT…QQIAIFVDLQ (233 aa). The interval 247-335 is alpha C-terminal domain (alpha-CTD); the sequence is VDPILLRPVD…MDDRFAYRSR (89 aa).

This sequence belongs to the RNA polymerase alpha chain family. Homodimer. The RNAP catalytic core consists of 2 alpha, 1 beta, 1 beta' and 1 omega subunit. When a sigma factor is associated with the core the holoenzyme is formed, which can initiate transcription.

It carries out the reaction RNA(n) + a ribonucleoside 5'-triphosphate = RNA(n+1) + diphosphate. Functionally, DNA-dependent RNA polymerase catalyzes the transcription of DNA into RNA using the four ribonucleoside triphosphates as substrates. The polypeptide is DNA-directed RNA polymerase subunit alpha (Acinetobacter baylyi (strain ATCC 33305 / BD413 / ADP1)).